A 375-amino-acid chain; its full sequence is Solute carrier family 35 member F2 (375 aa).

At methionine 1 the chain carries N-acetylmethionine. Phosphoserine is present on residues serine 5, serine 22, serine 25, and serine 28. 10 consecutive transmembrane segments (helical) span residues 39–59 (ILKT…TAIT), 73–93 (MLQS…MLAF), 108–126 (WWKY…YLIV), 136–156 (SVQL…WFIL), 165–185 (FIAV…DILA), 195–215 (VLIG…SNVC), 227–247 (EFLG…LLIV), 263–283 (LLFV…PLVI), 290–310 (SVNL…LFLF), and 314–334 (FSGL…LYCS). Serine 372 is modified (phosphoserine).

Belongs to the SLC35F solute transporter family.

It is found in the membrane. Functionally, putative solute transporter. This is Solute carrier family 35 member F2 (Slc35f2) from Mus musculus (Mouse).